We begin with the raw amino-acid sequence, 373 residues long: MQKDSLPTLSPAVPPYVMLGLTVAYTIFYCLLFVFVYVQLWLVLRYRHKRFSYQTVFLFLCLLWAALRALLFSFYFKNCVTANTLGPFCFWLLYCFPVCLQFFTLSLMNLYFAQVIFKAKSKYSPELQKYRLPLYLLFLSISLLFLLVNLTCALLVKINRANTETVVLVRVTVNDSLFVLCAVSLSLCLYRIAKMSLANIYLEAKGTSVCQVTLIGVTVVLLYSSRACYNLVVLALTKIKSINSFDYDWYNVSDQADLKSTLGDAGYVVFGVILFVWELLPTSLVVYFFRVRKPTLDRSASVIPGHMFSSRAYFFDNPRRYDSDDDLAWSIIPQNIQASFTSDSYDWSCRNNSFTAYTEAEESHLAPEELNPY.

Residues 1-15 lie on the Lumenal side of the membrane; the sequence is MQKDSLPTLSPAVPP. The chain crosses the membrane as a helical span at residues 16–36; that stretch reads YVMLGLTVAYTIFYCLLFVFV. At 37-55 the chain is on the cytoplasmic side; the sequence is YVQLWLVLRYRHKRFSYQT. The helical transmembrane segment at 56 to 76 threads the bilayer; the sequence is VFLFLCLLWAALRALLFSFYF. The Lumenal portion of the chain corresponds to 77-84; it reads KNCVTANT. A helical transmembrane segment spans residues 85–105; sequence LGPFCFWLLYCFPVCLQFFTL. Residues 106-135 lie on the Cytoplasmic side of the membrane; the sequence is SLMNLYFAQVIFKAKSKYSPELQKYRLPLY. The helical transmembrane segment at 136–156 threads the bilayer; the sequence is LLFLSISLLFLLVNLTCALLV. Residues 157-176 lie on the Lumenal side of the membrane; it reads KINRANTETVVLVRVTVNDS. A helical transmembrane segment spans residues 177–197; it reads LFVLCAVSLSLCLYRIAKMSL. Over 198-213 the chain is Cytoplasmic; it reads ANIYLEAKGTSVCQVT. A helical membrane pass occupies residues 214-234; it reads LIGVTVVLLYSSRACYNLVVL. The Lumenal segment spans residues 235–268; the sequence is ALTKIKSINSFDYDWYNVSDQADLKSTLGDAGYV. Residues 269-289 form a helical membrane-spanning segment; it reads VFGVILFVWELLPTSLVVYFF. Residues 290–373 lie on the Cytoplasmic side of the membrane; sequence RVRKPTLDRS…HLAPEELNPY (84 aa).

This sequence belongs to the GPR137 family.

Its subcellular location is the lysosome membrane. Lysosomal integral membrane protein that regulates the localization and activity of mTORC1, a signaling complex promoting cell growth in response to growth factors, energy levels, and amino acids. Interacts with Rag GTPases and increases the lysosomial localization and activity of Rag GTPases and thereby regulates mTORC1 translocation and activity in lysosome. Also acts as a negative regulator of osteoclast activity. May be involved in interleukin-4-induced M2 macrophage polarization. Its function is as follows. Also acts as a negative regulator of osteoclast activity. May be involved in interleukin-4-induced M2 macrophage polarization. This Danio rerio (Zebrafish) protein is G protein-coupled receptor 137Ba.